Consider the following 119-residue polypeptide: Phytosulfokines 2 (119 aa).

Residues 1–34 (MSTTRGVSSSSAAAALALLLLFALCFFSFHSAAA) form the signal peptide. The propeptide occupies 35-109 (ARAVPRDEHQ…RRLLSDAHLD (75 aa)). Y110 and Y112 each carry sulfotyrosine. Positions 115–119 (HKNKP) are excised as a propeptide.

The protein belongs to the phytosulfokine family. In terms of processing, sulfation is important for activity and for the binding to a putative membrane receptor. Post-translationally, PSK-alpha is produced by endopeptidase digestion. PSK-beta is produced from PSK-alpha by exopeptidase digestion.

It localises to the secreted. Functionally, promotes plant cell differentiation, organogenesis and somatic embryogenesis as well as cell proliferation. The polypeptide is Phytosulfokines 2 (PSK2) (Oryza sativa subsp. indica (Rice)).